The primary structure comprises 344 residues: Eukaryotic translation initiation factor 2 subunit alpha (344 aa).

An S1 motif domain is found at Asp21–Arg92. Ser56 is subject to Phosphoserine; by GCN2. The disordered stretch occupies residues Leu309 to Glu344. Acidic residues predominate over residues Glu314 to Ile336. Phosphoserine; by CK2 occurs at positions 317 and 322.

This sequence belongs to the eIF-2-alpha family. In terms of assembly, eukaryotic translation initiation factor 2 eIF2 is a heterotrimeric complex composed of an alpha, a beta and a gamma subunit. Post-translationally, phosphorylated at Ser-56 by GCN2. Phosphorylated at Ser-317 and Ser-322 by CK2.

Its subcellular location is the cytoplasm. The protein resides in the cytosol. Functions in the early steps of protein synthesis by forming a ternary complex with GTP and initiator tRNA. This complex binds to a 40S ribosomal subunit, followed by mRNA binding to form a 43S pre-initiation complex. Junction of the 60S ribosomal subunit to form the 80S initiation complex is preceded by hydrolysis of the GTP bound to eIF-2 and release of an eIF-2-GDP binary complex. In order for eIF-2 to recycle and catalyze another round of initiation, the GDP bound to eIF-2 must exchange with GTP by way of a reaction catalyzed by eIF2B. In Arabidopsis thaliana (Mouse-ear cress), this protein is Eukaryotic translation initiation factor 2 subunit alpha.